A 254-amino-acid polypeptide reads, in one-letter code: Autophagy-related protein 5 (254 aa).

A Glycyl lysine isopeptide (Lys-Gly) (interchain with G-Cter in ATG12) cross-link involves residue Lys-102.

The protein belongs to the ATG5 family. In terms of assembly, conjugated with ATG12. The ATG5-ATG12 conjugate forms a complex with several units of ATG16. The ATG12-ATG5 conjugate also associates with ATG3. Conjugated to ATG12; which is essential for autophagy. Conjugation with ATG12 involves ATG7 as an E1-like activating enzyme and ATG10 as an E2-like conjugating enzyme.

It is found in the preautophagosomal structure membrane. Involved in cytoplasm to vacuole transport (Cvt) and autophagic vesicle formation. Autophagy is essential for maintenance of amino acid levels and protein synthesis under nitrogen starvation. Required for selective autophagic degradation of the nucleus (nucleophagy). Also required for mitophagy, which eliminates defective or superfluous mitochondria in order to fulfill cellular energy requirements and prevent excess ROS production. Conjugation with ATG12, through a ubiquitin-like conjugating system involving ATG7 as an E1-like activating enzyme and ATG10 as an E2-like conjugating enzyme, is essential for its function. The ATG12-ATG5 conjugate acts as an E3-like enzyme which is required for lipidation of ATG8 and ATG8 association to the vesicle membranes. ATG12-ATG5 rearranges the ATG3 catalytic center and enhances its E2 activity. Autophagy is required for proper vegetative growth, asexual/sexual reproduction, and full virulence. Autophagy is particularly involved in the biosynthesis of deoxynivalenol (DON), an important virulence determinant. The chain is Autophagy-related protein 5 from Gibberella zeae (strain ATCC MYA-4620 / CBS 123657 / FGSC 9075 / NRRL 31084 / PH-1) (Wheat head blight fungus).